The primary structure comprises 387 residues: Chaperone protein DnaJ (387 aa).

In terms of domain architecture, J spans 6–71 (DYYEILGVPR…EKRRKYDQFG (66 aa)). The segment at 146-228 (GCEKEIPIYR…CGGTGTVRRQ (83 aa)) adopts a CR-type zinc-finger fold. Zn(2+)-binding residues include cysteine 159, cysteine 162, cysteine 176, cysteine 179, cysteine 202, cysteine 205, cysteine 216, and cysteine 219. CXXCXGXG motif repeat units lie at residues 159 to 166 (CSVCGGSG), 176 to 183 (CQKCGGTG), 202 to 209 (CDACGGVG), and 216 to 223 (CRECGGTG).

The protein belongs to the DnaJ family. In terms of assembly, homodimer. Zn(2+) is required as a cofactor.

The protein resides in the cytoplasm. Functionally, participates actively in the response to hyperosmotic and heat shock by preventing the aggregation of stress-denatured proteins and by disaggregating proteins, also in an autonomous, DnaK-independent fashion. Unfolded proteins bind initially to DnaJ; upon interaction with the DnaJ-bound protein, DnaK hydrolyzes its bound ATP, resulting in the formation of a stable complex. GrpE releases ADP from DnaK; ATP binding to DnaK triggers the release of the substrate protein, thus completing the reaction cycle. Several rounds of ATP-dependent interactions between DnaJ, DnaK and GrpE are required for fully efficient folding. Also involved, together with DnaK and GrpE, in the DNA replication of plasmids through activation of initiation proteins. The sequence is that of Chaperone protein DnaJ from Caldicellulosiruptor saccharolyticus (strain ATCC 43494 / DSM 8903 / Tp8T 6331).